A 298-amino-acid chain; its full sequence is ATP phosphoribosyltransferase (298 aa).

It belongs to the ATP phosphoribosyltransferase family. Long subfamily. Mg(2+) serves as cofactor.

The protein localises to the cytoplasm. It carries out the reaction 1-(5-phospho-beta-D-ribosyl)-ATP + diphosphate = 5-phospho-alpha-D-ribose 1-diphosphate + ATP. It participates in amino-acid biosynthesis; L-histidine biosynthesis; L-histidine from 5-phospho-alpha-D-ribose 1-diphosphate: step 1/9. Its activity is regulated as follows. Feedback inhibited by histidine. Its function is as follows. Catalyzes the condensation of ATP and 5-phosphoribose 1-diphosphate to form N'-(5'-phosphoribosyl)-ATP (PR-ATP). Has a crucial role in the pathway because the rate of histidine biosynthesis seems to be controlled primarily by regulation of HisG enzymatic activity. This chain is ATP phosphoribosyltransferase, found in Aliivibrio salmonicida (strain LFI1238) (Vibrio salmonicida (strain LFI1238)).